A 175-amino-acid chain; its full sequence is Protein-export protein SecB (175 aa).

This sequence belongs to the SecB family. In terms of assembly, homotetramer, a dimer of dimers. One homotetramer interacts with 1 SecA dimer.

Its subcellular location is the cytoplasm. One of the proteins required for the normal export of preproteins out of the cell cytoplasm. It is a molecular chaperone that binds to a subset of precursor proteins, maintaining them in a translocation-competent state. It also specifically binds to its receptor SecA. The sequence is that of Protein-export protein SecB from Ehrlichia chaffeensis (strain ATCC CRL-10679 / Arkansas).